Here is a 185-residue protein sequence, read N- to C-terminus: C-phycoerythrin beta chain (185 aa).

(2R,3E)-phycoerythrobilin contacts are provided by C49 and C60. N4-methylasparagine is present on N71. 2 residues coordinate (2R,3E)-phycoerythrobilin: C81 and C166.

Belongs to the phycobiliprotein family. Heterodimer of an alpha and a beta chain. Contains three covalently linked bilin chromophores.

The protein resides in the cellular thylakoid membrane. Functionally, light-harvesting photosynthetic bile pigment-protein from the phycobiliprotein complex. This is C-phycoerythrin beta chain (cpeB) from Pseudanabaena tenuis (strain PCC 7409).